A 333-amino-acid chain; its full sequence is tRNA N6-adenosine threonylcarbamoyltransferase (333 aa).

Positions 111 and 115 each coordinate Fe cation. Residues Leu-134–Gly-138, Asp-167, Gly-180, and Asn-272 contribute to the substrate site. Asp-300 contributes to the Fe cation binding site.

Belongs to the KAE1 / TsaD family. Requires Fe(2+) as cofactor.

Its subcellular location is the cytoplasm. It carries out the reaction L-threonylcarbamoyladenylate + adenosine(37) in tRNA = N(6)-L-threonylcarbamoyladenosine(37) in tRNA + AMP + H(+). In terms of biological role, required for the formation of a threonylcarbamoyl group on adenosine at position 37 (t(6)A37) in tRNAs that read codons beginning with adenine. Is involved in the transfer of the threonylcarbamoyl moiety of threonylcarbamoyl-AMP (TC-AMP) to the N6 group of A37, together with TsaE and TsaB. TsaD likely plays a direct catalytic role in this reaction. The sequence is that of tRNA N6-adenosine threonylcarbamoyltransferase from Legionella pneumophila subsp. pneumophila (strain Philadelphia 1 / ATCC 33152 / DSM 7513).